The sequence spans 645 residues: Cyclin-D-binding Myb-like transcription factor 1 (645 aa).

Disordered stretches follow at residues glutamine 34 to tyrosine 71 and arginine 95 to glutamate 119. 2 stretches are compositionally biased toward acidic residues: residues aspartate 36–threonine 46 and arginine 95–serine 105. A Myb-like 1 domain is found at glycine 219–arginine 257. Positions lysine 262–glutamine 327 constitute an HTH myb-type domain. The H-T-H motif DNA-binding region spans tryptophan 300 to leucine 323. Positions tryptophan 333–lysine 382 constitute a Myb-like 2 domain. A disordered region spans residues valine 568 to asparagine 645. Over residues glutamate 587–aspartate 597 the composition is skewed to basic and acidic residues. Over residues isoleucine 615–serine 625 the composition is skewed to polar residues.

This sequence belongs to the DMTF1 family.

It is found in the nucleus. Its function is as follows. Transcriptional activator which activates the CDKN2A/ARF locus in response to Ras-Raf signaling, thereby promoting p53/TP53-dependent growth arrest. Binds to the consensus sequence 5'-CCCG[GT]ATGT-3'. This is Cyclin-D-binding Myb-like transcription factor 1 (dmtf1) from Danio rerio (Zebrafish).